The sequence spans 200 residues: Small ribosomal subunit protein uS4 (200 aa).

The disordered stretch occupies residues 22-42 (TGKELEKRPYAPGPHGPGQRK). The S4 RNA-binding domain maps to 92-152 (SRLDNIVYRL…EKSQNLSVVK (61 aa)).

The protein belongs to the universal ribosomal protein uS4 family. In terms of assembly, part of the 30S ribosomal subunit. Contacts protein S5. The interaction surface between S4 and S5 is involved in control of translational fidelity.

One of the primary rRNA binding proteins, it binds directly to 16S rRNA where it nucleates assembly of the body of the 30S subunit. Its function is as follows. With S5 and S12 plays an important role in translational accuracy. The protein is Small ribosomal subunit protein uS4 of Bacillus licheniformis (strain ATCC 14580 / DSM 13 / JCM 2505 / CCUG 7422 / NBRC 12200 / NCIMB 9375 / NCTC 10341 / NRRL NRS-1264 / Gibson 46).